A 251-amino-acid polypeptide reads, in one-letter code: MMIHLLIVDALNLIRRIHAVQGSPCVNACQHALQQLIQHSRPTHAVAVFDEDDRSESWRHQILPDYKAGRSPMPDNLQQEMPQLRQAFESLGVACWHSPGNEADDLAATLTAKVAGGGHQVTIVSTDKGYCQLLAPSVQIRDYFQKRWLDMPFVQQEFGVSPQQLSDYWGLAGISSSKIPGVAGIGPKTAVLLLQQAGSLDGLYQDLEQVPEKWRGKLEQHREMAYVSKRVATLRTDLALTGNLQQLRLPV.

Mg(2+) is bound at residue aspartate 104. Positions 160 to 248 (VSPQQLSDYW…ALTGNLQQLR (89 aa)) constitute a 5'-3' exonuclease domain. Residues leucine 171, alanine 172, proline 180, valine 182, and isoleucine 185 each coordinate K(+). An interaction with DNA region spans residues 184–189 (GIGPKT).

This sequence belongs to the Xni family. It depends on Mg(2+) as a cofactor. Requires K(+) as cofactor.

Has flap endonuclease activity. During DNA replication, flap endonucleases cleave the 5'-overhanging flap structure that is generated by displacement synthesis when DNA polymerase encounters the 5'-end of a downstream Okazaki fragment. In Serratia proteamaculans (strain 568), this protein is Flap endonuclease Xni.